Consider the following 501-residue polypeptide: MTYVLGIDLGTSSLKGILMDEVGNLITTKSAEYQIDTPKQGYSEQRPEYWIVALESVLTGLSVEISDFGQQLAGISFSGQMHSLVVLDDNNKPVYPAILWNDVRTSKQCQEITDRLGQRLLEITKNIALEGFTLPKILWLQENEPEVWSRVKKIMLPKDYLSLWLTGNIYTEFSDAAGTLLLDIEKKQWSEEITDAFNIDRRILPELIESTDRTGFVKAEIAERYKLTNEVKVFAGGADNAAAALGVGLINEEVGLISMGTSGVVSAYEPKIADYKGKLHFFNHTVPGACYSMGVTLAAGNSLNWYKETFGKGLSFNELLSEVYTVSPGSEGLLFTPYIVGERTPHFDSKIRGSFIGISAHHEQKHFSRAVLEGITFSLRDSKDIMEKTKNKKFKRLISVGGGAQNPDIMQMQADIFNSEMIRLTVEQGPGLGACMIAAFGCGLFDSLEAVTKAFVHYKEASFIPNPKNVARYEQIYQIWKQVYKNTSEISHQLVEFNDEG.

Substrate is bound at residue 81-82; it reads MH. Residue Asp-239 is the Proton acceptor of the active site.

Belongs to the FGGY kinase family.

It carries out the reaction D-xylulose + ATP = D-xylulose 5-phosphate + ADP + H(+). Its function is as follows. Catalyzes the phosphorylation of D-xylulose to D-xylulose 5-phosphate. This chain is Xylulose kinase, found in Lactococcus lactis subsp. lactis (strain IL1403) (Streptococcus lactis).